Here is a 448-residue protein sequence, read N- to C-terminus: Rhodopsin (448 aa).

The Extracellular segment spans residues 2-33 (GRDLRDNETWWYNPSIVVHPHWREFDQVPDAV). N-linked (GlcNAc...) asparagine glycosylation is present at asparagine 8. A helical membrane pass occupies residues 34–58 (YYSLGIFIGICGIIGCGGNGIVIYL). Residues 59–70 (FTKTKSLQTPAN) lie on the Cytoplasmic side of the membrane. The chain crosses the membrane as a helical span at residues 71–97 (MFIINLAFSDFTFSLVNGFPLMTISCF). Over 98–109 (LKKWIFGFAACK) the chain is Extracellular. An intrachain disulfide couples cysteine 108 to cysteine 186. Residues 110–131 (VYGFIGGIFGFMSIMTMAMISI) traverse the membrane as a helical segment. The Cytoplasmic portion of the chain corresponds to 132–151 (DRYNVIGRPMAASKKMSHRR). Residues 152–172 (AFIMIIFVWLWSVLWAIGPIF) traverse the membrane as a helical segment. Over 173 to 199 (GWGAYTLEGVLCNCSFDYISRDSTTRS) the chain is Extracellular. The chain crosses the membrane as a helical span at residues 200 to 224 (NILCMFILGFFGPILIIFFCYFNIV). Topologically, residues 225–261 (MSVSNHEKEMAAMAKRLNAKELRKAQAGANAEMRLAK) are cytoplasmic. The chain crosses the membrane as a helical span at residues 262 to 283 (ISIVIVSQFLLSWSPYAVVALL). At 284–293 (AQFGPLEWVT) the chain is on the extracellular side. The chain crosses the membrane as a helical span at residues 294-315 (PYAAQLPVMFAKASAIHNPMIY). Lysine 305 is subject to N6-(retinylidene)lysine. Residues 316-448 (SVSHPKFREA…QGVDNQAYQA (133 aa)) lie on the Cytoplasmic side of the membrane. 2 S-palmitoyl cysteine lipidation sites follow: cysteine 336 and cysteine 337. Residues 343–352 (ETEDDKDAET) are compositionally biased toward acidic residues. Residues 343–448 (ETEDDKDAET…QGVDNQAYQA (106 aa)) are disordered. Positions 359 to 391 (SSDAAPSADAAQMKEMMAMMQKMQQQQAAYPPQ) are enriched in low complexity. Over residues 392 to 437 (GYAPPPQGYPPQGYPPQGYPPQGYPPQGYPPPPQGAPPQGAPPAAP) the composition is skewed to pro residues.

It belongs to the G-protein coupled receptor 1 family. Opsin subfamily. Post-translationally, contains one covalently linked retinal chromophore. Upon light absorption, the covalently bound 11-cis-retinal is converted to all-trans-retinal. After hydrolysis of the Schiff base and release of the covalently bound all-trans-retinal, active rhodopsin is regenerated by binding of a fresh molecule of 11-cis-retinal. In terms of tissue distribution, retina, rhabdomere membrane of photoreceptor cells (at protein level).

Its subcellular location is the cell projection. It localises to the rhabdomere membrane. Its function is as follows. Photoreceptor required for image-forming vision at low light intensity. Light-induced isomerization of 11-cis to all-trans retinal triggers a conformational change that activates signaling via G-proteins. Signaling mediates the activation of phospholipase C. Subsequent receptor phosphorylation mediates displacement of the bound G-protein alpha subunit by arrestin and terminates signaling. The chain is Rhodopsin (RHO) from Todarodes pacificus (Japanese flying squid).